Reading from the N-terminus, the 56-residue chain is Small ribosomal subunit protein uS14 (56 aa).

The Zn(2+) site is built by cysteine 21, cysteine 24, cysteine 39, and cysteine 42.

Belongs to the universal ribosomal protein uS14 family. Component of the 40S small ribosomal subunit. The cofactor is Zn(2+).

It is found in the cytoplasm. The protein localises to the cytosol. The protein resides in the rough endoplasmic reticulum. In Plutella xylostella (Diamondback moth), this protein is Small ribosomal subunit protein uS14 (RpS29).